A 192-amino-acid chain; its full sequence is Nucleoside triphosphate pyrophosphatase (192 aa).

The active-site Proton acceptor is Asp-73.

Belongs to the Maf family. The cofactor is a divalent metal cation.

It is found in the cytoplasm. It carries out the reaction a ribonucleoside 5'-triphosphate + H2O = a ribonucleoside 5'-phosphate + diphosphate + H(+). The enzyme catalyses a 2'-deoxyribonucleoside 5'-triphosphate + H2O = a 2'-deoxyribonucleoside 5'-phosphate + diphosphate + H(+). Functionally, nucleoside triphosphate pyrophosphatase. May have a dual role in cell division arrest and in preventing the incorporation of modified nucleotides into cellular nucleic acids. This Ehrlichia canis (strain Jake) protein is Nucleoside triphosphate pyrophosphatase.